Here is a 682-residue protein sequence, read N- to C-terminus: Iron-phytosiderophore transporter yellow stripe 1 (682 aa).

Residues 1 to 36 (MDLARRGGAAGADDEGEIERHEPAPEDMESDPAAAR) are disordered. 15 helical membrane-spanning segments follow: residues 56–76 (GVVAALLIGFMYSVIVMKIAL), 79–99 (GLVPTLNVSAALMAFLALRGW), 124–144 (CAVACYTIAFGGGFGSTLLGL), 167–187 (GFGWMAGFVAAISFAGLLSLI), 236–256 (LSFVWSFFQWFYTGGEVCGFV), 288–308 (LVNISTLLGAILSWGILWPLI), 334–354 (FLCIALIMGDGTYHFFKVFGV), 396–416 (FPAWAAYAGYAALTVVSAVII), 428–448 (VIVAYVLAPLLGFANSYGTGL), 460–480 (IALFIFAAWAGRDNGVIAGLA), 514–534 (VAQFIGTAMGCVVAPLTFLLF), 549–569 (APYGLIYRNMAILGVEGFSVL), 574–594 (LALSAGFFAFAFVFSVARDVL), 612–632 (FLVGGSFAIDMCVGSLAVFVW), and 640–660 (AVFMVPAVASGLICGDGIWTF).

Belongs to the YSL (TC 2.A.67.2) family. In terms of tissue distribution, expressed in roots of young maize seedlings. Not detected in leaves of iron-sufficient plants, but accumulates in roots and leaves of iron-deficient plants.

Its subcellular location is the membrane. Functionally, involved in Fe(3+) uptake. Acts as a proton-coupled symporter for phytosiderophore- and nicotianamine-chelated metals. Capable of transporting either Fe(2+)-nicotianamine or Fe(3+)-phytosiderophore. May transport iron, zinc, nickel, copper and, at a lower rate, manganese and cadmium. The polypeptide is Iron-phytosiderophore transporter yellow stripe 1 (YS1) (Zea mays (Maize)).